The primary structure comprises 368 residues: UPF0284 protein PCC8801_3324 (368 aa).

Belongs to the UPF0284 family.

The chain is UPF0284 protein PCC8801_3324 from Rippkaea orientalis (strain PCC 8801 / RF-1) (Cyanothece sp. (strain PCC 8801)).